Consider the following 478-residue polypeptide: CDK5 and ABL1 enzyme substrate 2 (478 aa).

A disordered region spans residues 1–121 (MAAAAAGGAP…GLGLDGQRQR (121 aa)). A compositionally biased stretch (pro residues) spans 11–24 (GPAPGPAGPPPPAA). The span at 25 to 35 (PTSAARAPPQA) shows a compositional bias: low complexity. Basic residues predominate over residues 36 to 46 (LRRRGDSRRRQ). Over residues 69 to 92 (EKPPPPPAEAREPPAPPPPEPPTG) the composition is skewed to pro residues. 2 positions are modified to phosphoserine: serine 130 and serine 208. The tract at residues 257–296 (SDSHGLLPTPRPSVPRTLPGSRHKPAPTKSAPASTELGSD) is disordered.

Belongs to the cyclin family. As to quaternary structure, binds to CDK3, CDK5 and ABL1. The C-terminal cyclin-box-like region binds to CDK5.

Functionally, unknown. Probably involved in G1-S cell cycle transition. The polypeptide is CDK5 and ABL1 enzyme substrate 2 (CABLES2) (Homo sapiens (Human)).